Consider the following 1649-residue polypeptide: Cortactin-binding protein 2 (1649 aa).

A disordered region spans residues 1–27 (MATDSASCEPDLSRAPGDAEGATAEAA). The span at 15-25 (APGDAEGATAE) shows a compositional bias: low complexity. The stretch at 118–275 (RKMQERMSAQ…EQMKKGNDGK (158 aa)) forms a coiled coil. 3 disordered regions span residues 322–439 (PLSV…PGLN), 451–476 (GNAN…PTSR), and 492–604 (ALSR…LPPK). Residues 330–342 (STGSPLVSTNTKG) show a composition bias toward polar residues. The span at 395-416 (STPSTPSGTAPAAAQTLGAAPQ) shows a compositional bias: low complexity. A compositionally biased stretch (polar residues) spans 492 to 503 (ALSRFTSPQAGA). Arginine 495 bears the Asymmetric dimethylarginine mark. ANK repeat units follow at residues 699-729 (GRPT…DINY), 733-762 (DSHS…RVDA), 766-795 (NGFT…NINH), 799-828 (GGQT…DRSI), 832-861 (DGWT…PAPG), and 901-931 (EGWT…EPER). Positions 1438–1471 (SAAWRKVNTSPRKKPGHFSSPMWNKPDLKHEGMR) are disordered. Serine 1510 bears the Phosphoserine mark. Residues 1527–1649 (KSESDISKIA…KHEHVEKRNK (123 aa)) form a disordered region. The segment covering 1528-1546 (SESDISKIADSREDLRTFD) has biased composition (basic and acidic residues). Polar residues-rich tracts occupy residues 1547-1557 (SSRTNPVTSAP), 1571-1584 (PLSS…SNSK), and 1621-1630 (NTRQLEINNN). The segment covering 1631 to 1649 (SKEENWNVDKHEHVEKRNK) has biased composition (basic and acidic residues).

Interacts with CTTN/cortactin SH3 domain. Interacts with STRN, STRN4/zinedin and MOB4/phocein; this interactions mediate the association with the STRIPAK core complex and may regulate dendritic spine distribution of the STRIPAK complex in hippocampal neurons. Activation of glutamate receptors weakens the interaction with STRN and STRN4.

It localises to the cytoplasm. Its subcellular location is the cell cortex. The protein localises to the cell projection. The protein resides in the dendritic spine. Its function is as follows. Regulates the dendritic spine distribution of CTTN/cortactin in hippocampal neurons, and thus controls dendritic spinogenesis and dendritic spine maintenance. Associates with the striatin-interacting phosphatase and kinase (STRIPAK) core complex to regulate dendritic spine distribution of the STRIPAK complex in hippocampal neurons. The chain is Cortactin-binding protein 2 (Cttnbp2) from Rattus norvegicus (Rat).